A 946-amino-acid polypeptide reads, in one-letter code: Protein translocase subunit SecA (946 aa).

Residues Q87, 105–109 (GEGKT), and D524 each bind ATP. Residues 905 to 926 (APASDAAQRDPKNPASWGKIGR) form a disordered region. 4 residues coordinate Zn(2+): C930, C932, C941, and H942.

It belongs to the SecA family. As to quaternary structure, monomer and homodimer. Part of the essential Sec protein translocation apparatus which comprises SecA, SecYEG and auxiliary proteins SecDF-YajC and YidC. Zn(2+) serves as cofactor.

It localises to the cell inner membrane. Its subcellular location is the cytoplasm. The catalysed reaction is ATP + H2O + cellular proteinSide 1 = ADP + phosphate + cellular proteinSide 2.. In terms of biological role, part of the Sec protein translocase complex. Interacts with the SecYEG preprotein conducting channel. Has a central role in coupling the hydrolysis of ATP to the transfer of proteins into and across the cell membrane, serving both as a receptor for the preprotein-SecB complex and as an ATP-driven molecular motor driving the stepwise translocation of polypeptide chains across the membrane. The protein is Protein translocase subunit SecA of Bradyrhizobium diazoefficiens (strain JCM 10833 / BCRC 13528 / IAM 13628 / NBRC 14792 / USDA 110).